Consider the following 285-residue polypeptide: uncharacterized protein (285 aa).

2 disordered regions span residues 115–139 (AAGK…QERN) and 152–183 (EHDV…NRGV). 2 stretches are compositionally biased toward basic and acidic residues: residues 128 to 138 (KEADVQTKQER) and 152 to 170 (EHDV…DLKT).

This is an uncharacterized protein from Escherichia coli (strain K12).